Here is a 241-residue protein sequence, read N- to C-terminus: Pyridoxal phosphate phosphatase PHOSPHO2 (241 aa).

Catalysis depends on Asp8, which acts as the Nucleophile. Mg(2+)-binding residues include Asp8 and Asp10. Asp10 (proton donor) is an active-site residue. Residues Asp19 and Asp99 each coordinate substrate. Residue Asp179 participates in Mg(2+) binding.

The protein belongs to the HAD-like hydrolase superfamily. PHOSPHO family. Mg(2+) is required as a cofactor.

The catalysed reaction is pyridoxal 5'-phosphate + H2O = pyridoxal + phosphate. Phosphatase that has high activity toward pyridoxal 5'-phosphate (PLP). Also active at much lower level toward pyrophosphate, phosphoethanolamine (PEA), phosphocholine (PCho), phospho-l-tyrosine, fructose-6-phosphate, p-nitrophenyl phosphate, and h-glycerophosphate. This chain is Pyridoxal phosphate phosphatase PHOSPHO2 (Phospho2), found in Mus musculus (Mouse).